The primary structure comprises 265 residues: Regulator of calcineurin 2 (265 aa).

Phosphoserine occurs at positions 104 and 110. 2 disordered regions span residues 127–213 (LLSI…DKSA) and 242–265 (ENDVNATASNPPKSPSITVNEFFH). Threonine 132 bears the Phosphothreonine mark. 2 stretches are compositionally biased toward low complexity: residues 141–161 (SSSLNKGGSSLSPDKSSLESP) and 182–202 (LSRSSSSTSNLSLNRSSQTSL). Phosphoserine is present on residues serine 152, serine 157, serine 160, serine 183, serine 187, serine 193, serine 201, and serine 255.

In terms of processing, phosphorylation of Ser-152 and Ser-160 is induced 2-fold in response to mating pheromone.

Its subcellular location is the cytoplasm. The polypeptide is Regulator of calcineurin 2 (RCN2) (Saccharomyces cerevisiae (strain ATCC 204508 / S288c) (Baker's yeast)).